Consider the following 197-residue polypeptide: RNA pyrophosphohydrolase (197 aa).

Positions 6-150 (GYRPNVGIVI…KRDVYRKVMR (145 aa)) constitute a Nudix hydrolase domain. The Nudix box motif lies at 38 to 59 (GGINEGENIETAMYRELYEEVG).

Belongs to the Nudix hydrolase family. RppH subfamily. A divalent metal cation serves as cofactor.

Functionally, accelerates the degradation of transcripts by removing pyrophosphate from the 5'-end of triphosphorylated RNA, leading to a more labile monophosphorylated state that can stimulate subsequent ribonuclease cleavage. This Haemophilus ducreyi (strain 35000HP / ATCC 700724) protein is RNA pyrophosphohydrolase.